We begin with the raw amino-acid sequence, 576 residues long: Proline--tRNA ligase (576 aa).

It belongs to the class-II aminoacyl-tRNA synthetase family. ProS type 1 subfamily. In terms of assembly, homodimer.

The protein localises to the cytoplasm. It catalyses the reaction tRNA(Pro) + L-proline + ATP = L-prolyl-tRNA(Pro) + AMP + diphosphate. Functionally, catalyzes the attachment of proline to tRNA(Pro) in a two-step reaction: proline is first activated by ATP to form Pro-AMP and then transferred to the acceptor end of tRNA(Pro). As ProRS can inadvertently accommodate and process non-cognate amino acids such as alanine and cysteine, to avoid such errors it has two additional distinct editing activities against alanine. One activity is designated as 'pretransfer' editing and involves the tRNA(Pro)-independent hydrolysis of activated Ala-AMP. The other activity is designated 'posttransfer' editing and involves deacylation of mischarged Ala-tRNA(Pro). The misacylated Cys-tRNA(Pro) is not edited by ProRS. In Dechloromonas aromatica (strain RCB), this protein is Proline--tRNA ligase.